Consider the following 379-residue polypeptide: Stimulator of interferon genes protein (379 aa).

At methionine 1–glycine 17 the chain is on the cytoplasmic side. The mediates interaction with ZDHHC1 and ZDHHC11 stretch occupies residues methionine 1–leucine 190. Residues alanine 18–tryptophan 34 traverse the membrane as a helical segment. Lysine 20 participates in a covalent cross-link: Glycyl lysine isopeptide (Lys-Gly) (interchain with G-Cter in ubiquitin). The Lumenal segment spans residues glycine 35–leucine 44. A helical membrane pass occupies residues arginine 45–glutamate 69. Residues leucine 70–cysteine 91 are Cytoplasmic-facing. S-palmitoyl cysteine attachment occurs at residues cysteine 88 and cysteine 91. A helical transmembrane segment spans residues proline 92–tyrosine 106. At tyrosine 107–proline 116 the chain is on the lumenal side. A helical membrane pass occupies residues phenylalanine 117–leucine 134. Topologically, residues glycine 135 to serine 379 are cytoplasmic. Residue lysine 150 forms a Glycyl lysine isopeptide (Lys-Gly) (interchain with G-Cter in ubiquitin) linkage. A cyclic dinucleotide-binding domain (CBD) region spans residues phenylalanine 153 to glutamate 340. The 2',3'-cGAMP site is built by serine 162 and tyrosine 167. Residues serine 162 and tyrosine 167 each coordinate 3',3'-c-di-GMP. Tyrosine 167 contributes to the 2',3'-cUAMP binding site. At threonine 229 the chain carries Phosphothreonine. Lysine 236 participates in a covalent cross-link: Glycyl lysine isopeptide (Lys-Gly) (interchain with G-Cter in ubiquitin). Arginine 238 serves as a coordination point for 2',3'-cGAMP. Arginine 238 contributes to the 2',3'-cUAMP binding site. 3',3'-c-di-GMP contacts are provided by residues arginine 238–serine 241 and threonine 263. A Phosphoserine modification is found at serine 241. Position 263 (threonine 263) interacts with 2',3'-cGAMP. Threonine 263 serves as a coordination point for 2',3'-cUAMP. Residue lysine 338 forms a Glycyl lysine isopeptide (Lys-Gly) (interchain with G-Cter in SUMO) linkage. A C-terminal tail (CTT) region spans residues glutamate 340–serine 379. Positions valine 341–lysine 370 are disordered. Residues serine 345–glutamine 359 show a composition bias toward polar residues. Threonine 354 bears the Phosphothreonine mark. Residue serine 355 is modified to Phosphoserine; by MAP3K7. Threonine 356 bears the Phosphothreonine mark. Residues serine 358 and serine 366 each carry the phosphoserine; by TBK1 modification. Positions leucine 363–serine 366 match the pLxIS motif motif.

This sequence belongs to the STING family. As to quaternary structure, homodimer; forms a homodimer in absence of cyclic nucleotide (c-di-GMP or cGAMP); 'Lys-63'-linked ubiquitination at Lys-150 is required for homodimerization. Homotetramer; in presence of cyclic nucleotide (c-di-GMP or cGAMP), forms tetramers and higher-order oligomers through side-by-side packing. Interacts (when phosphorylated) with IRF3; following activation and phosphorylation on the pLxIS motif by TBK1, recruits IRF3. Interacts with RIGI, MAVS and SSR2. Interacts with RNF5 and TRIM56. Interacts with TBK1; when homodimer, leading to subsequent production of IFN-beta. Interacts with IFIT1 and IFIT2. Interacts with TRIM29; this interaction induces STING1 ubiquitination and subsequent degradation. Associates with the MHC-II complex. Interacts with STEEP1; interaction takes place upon cGAMP-activation and STING1 phosphorylation by MAP3K7/TAK1 and promotes STING1 translocation to COPII vesicles. Interacts with SEC24A, SEC24B, and SEC24C; promoting translocation to COPII vesicles. Interacts (when ubiquitinated) with SQSTM1; leading to relocalization to autophagosomes. Interacts with SURF4. Interacts with HNRNPA2B1. Interacts with ZDHHC1; ZDHHC1 constitutively interacts with STING1 and in presence of DNA viruses activates it by promoting its cGAMP-induced oligomerization and the recruitment of downstream signaling components. Interacts with ZDHHC11; in presence of DNA viruses promotes the recruitment of IRF3 to STING1. Interacts with TOMM70. Interacts with isoform IFI16-beta of IFI16. Interacts with TAB1; promoting recruitment of TAB1 to the endoplasmic reticulum membrane and subsequent activation of MAP3K7/TAK1. Interacts (via transmembrane domain) with TMEM203. Interacts with DDX41. Interacts with TMEM120A (via C-terminal domain); regulates the trafficking of STING1 from the ER to the ER-Golgi intermediate compartment to elicit antiviral effects. (Microbial infection) Interacts with human papillomavirus (HPV) protein E7. In terms of assembly, (Microbial infection) Interacts with adenovirus early E1A protein. As to quaternary structure, (Microbial infection) Interacts with herpes simplex virus 1 protein ICP34.5; this interaction inhibits the intracellular DNA sensing pathway. (Microbial infection) Interacts with Chikungunya virus non-structural protein 1; this interaction results in inhibition of cGAS-STING signaling and increased levels of palmitoylated nsP1 and protein stabilization. In terms of assembly, (Microbial infection) Interacts with human cytomegalovirus proteins UL94, UL42 and UL138; these interactions result in the inhibition of cGAS-STING signaling. As to quaternary structure, (Microbial infection) Interacts with varivella virus protein 39; this interaction results in the inhibition of cGAS-STING signaling. In terms of processing, phosphorylation by TBK1 leads to activation and production of IFN-beta. Following cyclic nucleotide (c-di-GMP or cGAMP)-binding, activation and translocation from the endoplasmic reticulum, STING1 is phosphorylated by TBK1 at Ser-366 in the pLxIS motif. The phosphorylated pLxIS motif constitutes an IRF3-binding motif, leading to recruitment of the transcription factor IRF3 to induce type-I interferons and other cytokines. The phosphorylated pLxIS motif facilitates SENP2 recruitment during late phase of viral infection. Phosphorylated on tyrosine residues upon MHC-II aggregation. Dephosphorylation by PPP6C leads to inactivation and decreased production of IFN-beta. Phosphorylation at Ser-358 is also required to activate IRF3. Phosphorylation at Ser-355 by MAP3K7/TAK1 facilitates its interaction with STEEP1, promoting STING1 translocation to COPII vesicles. Ubiquitinated. Ubiquitinated via 'Lys-63'-linked ubiquitin chains in response to double-stranded DNA treatment, leading to relocalization to autophagosomes and subsequent degradation; this process is dependent on SQSTM1. 'Lys-63'-linked ubiquitination mediated by TRIM56 at Lys-150 promotes homodimerization and recruitment of the antiviral kinase TBK1 and subsequent production of IFN-beta. 'Lys-48'-linked polyubiquitination at Lys-150 occurring after viral infection is mediated by RNF5 and leads to proteasomal degradation. 'Lys-11'-linked polyubiquitination at Lys-150 by RNF26 leads to stabilize STING1: it protects STING1 from RNF5-mediated 'Lys-48'-linked polyubiquitination. 'Lys-33'-linked and 'Lys-48'-linked deubiquitinated by USP20; leading to its stabilization and promotion of innate antiviral response. 'Lys-48'-linked deubiquitinated by USP44; leading to its stabilization and promotion of innate antiviral response. Deubiquitinated by USP13; leading to inhibition of innate antiviral response. 'Lys-63'-linked deubiquitinated by USP49; leading to inhibition of the subsequent recruitment of TBK1 to the signaling complex. 'Lys-63'-linked ubiquitination mediated by RNF39 promotes the activation of the cGAS-STING pathway. MARCHF5-mediated ubiquitination prevents the oxidation-induced polymer formation. Post-translationally, (Microbial infection) Deubiquitinated by Epstein-Barr virus BPLF1 on both 'Lys-48' and 'Lys-63'-linked ubiquitin chains; leading to inhibition of cGAS-STING signaling. In terms of processing, sumoylated at Lys-338 by TRIM38 during the early phase of viral infection, promoting its stability by preventing its relocalization to autophagosomes and subsequent degradation. Desumoylated by SENP2 during the late phase of viral infection. Palmitoylation takes place in the Golgi apparatus and creates a platform for the recruitment of TBK1. Ubiquitously expressed. Expressed in skin endothelial cells, alveolar type 2 pneumocytes, bronchial epithelium and alveolar macrophages.

The protein localises to the endoplasmic reticulum membrane. Its subcellular location is the cytoplasm. The protein resides in the perinuclear region. It is found in the endoplasmic reticulum-Golgi intermediate compartment membrane. It localises to the golgi apparatus membrane. The protein localises to the cytoplasmic vesicle. Its subcellular location is the autophagosome membrane. The protein resides in the mitochondrion outer membrane. It is found in the cell membrane. The enzyme catalyses H(+)(in) = H(+)(out). Activated upon binding to the hydrolysis-resistant 2'3'-cG(s)A(s)MP, an analog of cGAMP, in which phosphodiester linkages are replaced by phosphothioate linkages. Specifically inhibited by small-molecule H-151 (N-(4-ethylphenyl)-N'-1H-indol-3-yl-urea), which covalently binds Cys-91 and prevents palmitoylation and subsequent activation of STING1. In contrast to mouse protein, not activated by anticancer molecule 5,6-dimethylxanthenone 4-acetic acid (DMXAA). Inhibited by compound 18 ([(3S,4S)-2-(4-tert-butyl-3-chlorophenyl)-3-(2,3-dihydro-1,4-benzodioxin-6-yl)-7-fluoro-1-oxo-1,2,3,4-tetrahydroisoquinolin-4-yl]acetate), a competitive inhibitor with slow dissociation kinetics and good oral bioavailability. Homooligomerization and ability to promote the production of type I interferons is activated by C53, a small benzothiazinone-like compound that binds to the transmembrane regions. in the area of the putative pore. In contrast, compound C53, directly inhibits the proton channel activity and facilitate MAP1LC3B/LC3B lipidation and autophagosome formation. Facilitator of innate immune signaling that acts as a sensor of cytosolic DNA from bacteria and viruses and promotes the production of type I interferon (IFN-alpha and IFN-beta). Innate immune response is triggered in response to non-CpG double-stranded DNA from viruses and bacteria delivered to the cytoplasm. Acts by binding cyclic dinucleotides: recognizes and binds cyclic di-GMP (c-di-GMP), a second messenger produced by bacteria, cyclic UMP-AMP (2',3'-cUAMP), and cyclic GMP-AMP (cGAMP), a messenger produced by CGAS in response to DNA virus in the cytosol. Upon binding to c-di-GMP, cUAMP or cGAMP, STING1 oligomerizes, translocates from the endoplasmic reticulum and is phosphorylated by TBK1 on the pLxIS motif, leading to recruitment and subsequent activation of the transcription factor IRF3 to induce expression of type I interferon and exert a potent anti-viral state. Exhibits 2',3' phosphodiester linkage-specific ligand recognition: can bind both 2'-3' linked cGAMP (2'-3'-cGAMP) and 3'-3' linked cGAMP but is preferentially activated by 2'-3' linked cGAMP. The preference for 2'-3'-cGAMP, compared to other linkage isomers is probably due to the ligand itself, whichs adopts an organized free-ligand conformation that resembles the STING1-bound conformation and pays low energy costs in changing into the active conformation. In addition to promote the production of type I interferons, plays a direct role in autophagy. Following cGAMP-binding, STING1 buds from the endoplasmic reticulum into COPII vesicles, which then form the endoplasmic reticulum-Golgi intermediate compartment (ERGIC). The ERGIC serves as the membrane source for WIPI2 recruitment and LC3 lipidation, leading to formation of autophagosomes that target cytosolic DNA or DNA viruses for degradation by the lysosome. Promotes autophagy by acting as a proton channel that directs proton efflux from the Golgi to facilitate MAP1LC3B/LC3B lipidation. The autophagy- and interferon-inducing activities can be uncoupled and autophagy induction is independent of TBK1 phosphorylation. Autophagy is also triggered upon infection by bacteria: following c-di-GMP-binding, which is produced by live Gram-positive bacteria, promotes reticulophagy. May be involved in translocon function, the translocon possibly being able to influence the induction of type I interferons. May be involved in transduction of apoptotic signals via its association with the major histocompatibility complex class II (MHC-II). In terms of biological role, (Microbial infection) Antiviral activity is antagonized by oncoproteins, such as papillomavirus (HPV) protein E7 and adenovirus early E1A protein. Such oncoproteins prevent the ability to sense cytosolic DNA. This Homo sapiens (Human) protein is Stimulator of interferon genes protein.